We begin with the raw amino-acid sequence, 877 residues long: Transcriptional corepressor SEUSS (877 aa).

2 disordered regions span residues 1 to 42 (MVPS…VSPR) and 272 to 295 (LKSM…PLRP). Residues 272-292 (LKSMPQQRPQLPQQFQQQNLP) are compositionally biased toward low complexity. The dimerization stretch occupies residues 321-563 (PEDNNIEFWR…ETRTGPIESL (243 aa)). The Nuclear localization signal signature appears at 330 to 344 (RKFVAEYFAPNAKKR). 3 disordered regions span residues 560–599 (IESL…QQQQ), 612–633 (QQTV…LMQG), and 666–753 (GRHQ…NESS). Residues 582–618 (QQASDQLRQQQQQQQQQQQQQQQQQQQQQQQQTVSQN) are a coiled coil. Over residues 590–599 (QQQQQQQQQQ) the composition is skewed to low complexity. Over residues 614–633 (TVSQNTNSDQSSRQVALMQG) the composition is skewed to polar residues. Low complexity-rich tracts occupy residues 688–703 (QSPS…SSQQ) and 711–725 (QSPT…PSQN). Residues 726-741 (GIPSVNHMGSTNSPAM) show a composition bias toward polar residues.

This sequence belongs to the adn1/SEU family. In terms of assembly, forms a corepressor complex with LUG; LUG is the transcription repressor subunit and SEU the specific DNA-binding adapter. Interacts with AGL24-AP1 and SVP-AP1 dimers when complexed to SEU. Interacts with AP1/AGL7 and SEP3/AGL9. Binds to LUH. Expressed in root, leaves, seedlings, vegetative and reproductive shoot apical meristems, seeds, floral meristems and all floral organs.

Its subcellular location is the nucleus. It localises to the nucleoplasm. In terms of biological role, DNA-binding adapter subunit of the SEU-LUG transcriptional corepressor of the C class floral homeotic gene AGAMOUS during the early stages of floral meristem development. Is part of the A class cadastral complex that define the boundaries between the A and C class homeotic genes expression and function. Interacts together with APETALA2 and LEUNIG to repress AGAMOUS expression. In association with LUG, regulates petal shape through AGAMOUS-independent mechanisms. Controls cell division during petal development and enable the proper patterning of petal blade vasculature. Required for the proper elaboration of petal polarity along the adaxial/abaxial axis. May act through direct or indirect regulation of PHABULOSA and YAB1 and thus regulate cellular proliferation within the developing petal blade. In association with AINTEGUMENTA (ANT), coordinates patterning cues and cellular proliferation along the three positional axes of the developing gynoecium. Required for the development of the medial ridge and subsequent ovule initiation. The protein is Transcriptional corepressor SEUSS (SEU) of Arabidopsis thaliana (Mouse-ear cress).